The sequence spans 432 residues: Glutamyl-tRNA reductase (432 aa).

Residues 49-52 (TCNR), serine 101, 106-108 (EPQ), and glutamine 112 each bind substrate. The active-site Nucleophile is cysteine 50. Residue 181 to 186 (GAGETI) coordinates NADP(+). The segment at 407 to 432 (FPEKPGYQHPPIATPIVRTDDADPAP) is disordered.

It belongs to the glutamyl-tRNA reductase family. As to quaternary structure, homodimer.

It catalyses the reaction (S)-4-amino-5-oxopentanoate + tRNA(Glu) + NADP(+) = L-glutamyl-tRNA(Glu) + NADPH + H(+). Its pathway is porphyrin-containing compound metabolism; protoporphyrin-IX biosynthesis; 5-aminolevulinate from L-glutamyl-tRNA(Glu): step 1/2. In terms of biological role, catalyzes the NADPH-dependent reduction of glutamyl-tRNA(Glu) to glutamate 1-semialdehyde (GSA). This is Glutamyl-tRNA reductase from Xanthomonas oryzae pv. oryzae (strain PXO99A).